Consider the following 548-residue polypeptide: Chaperonin GroEL (548 aa).

Residues 30–33 (TLGP), lysine 51, 87–91 (DGTTT), glycine 415, 478–480 (NAA), and aspartate 494 each bind ATP.

Belongs to the chaperonin (HSP60) family. As to quaternary structure, forms a cylinder of 14 subunits composed of two heptameric rings stacked back-to-back. Interacts with the co-chaperonin GroES.

The protein resides in the cytoplasm. It carries out the reaction ATP + H2O + a folded polypeptide = ADP + phosphate + an unfolded polypeptide.. Its function is as follows. Together with its co-chaperonin GroES, plays an essential role in assisting protein folding. The GroEL-GroES system forms a nano-cage that allows encapsulation of the non-native substrate proteins and provides a physical environment optimized to promote and accelerate protein folding. The protein is Chaperonin GroEL of Trichlorobacter lovleyi (strain ATCC BAA-1151 / DSM 17278 / SZ) (Geobacter lovleyi).